A 639-amino-acid chain; its full sequence is Centromere protein T (639 aa).

5 disordered regions span residues 1-64, 266-294, 307-451, 458-477, and 494-534; these read MDGR…RPNA, QLSD…GLVS, SEKD…ERGT, AAEE…ESEE, and QPVL…TREP. Residues 12–23 are compositionally biased toward low complexity; sequence RAAPTPRVAVRS. The flexible stalk domain stretch occupies residues 80–500; sequence IIQNQPQVSP…YRPQPVLSPP (421 aa). The segment covering 267–281 has biased composition (polar residues); sequence LSDSKTSAQRSNTSY. Basic and acidic residues-rich tracts occupy residues 307–319, 329–338, 356–371, and 432–449; these read SEKD…EHVD, QGEEEQDHSQ, TEHH…SEKK, and PGAK…EIER. Residues 458 to 469 show a composition bias toward acidic residues; that stretch reads AAEEEATDDESD.

It belongs to the CENP-T/CNN1 family. As to quaternary structure, component of the CENPA-CAD complex, composed of CENPI, CENPK, CENPL, CENPO, CENPP, CENPQ, CENPR and CENPS. The CENPA-CAD complex is probably recruited on centromeres by the CENPA-NAC complex, at least composed of CENPA, CENPC, CENPH, CENPM, CENPN, CENPT and CENPU. Identified in a centromeric complex containing histones H2A, H2B, H3 and H4, and at least CENPA, CENPB, CENPC, CENPT, CENPN, HJURP, SUPT16H, SSRP1 and RSF1. Interacts (via N-terminus) with the NDC80 complex. Heterodimer with CENPW; this dimer coassembles with CENPS-CENPX heterodimers at centromeres to form the tetrameric CENP-T-W-S-X complex.

The protein localises to the nucleus. It is found in the chromosome. The protein resides in the centromere. It localises to the kinetochore. Its function is as follows. Component of the CENPA-NAC (nucleosome-associated) complex, a complex that plays a central role in assembly of kinetochore proteins, mitotic progression and chromosome segregation. The CENPA-NAC complex recruits the CENPA-CAD (nucleosome distal) complex and may be involved in incorporation of newly synthesized CENPA into centromeres. Part of a nucleosome-associated complex that binds specifically to histone H3-containing nucleosomes at the centromere, as opposed to nucleosomes containing CENPA. Component of the heterotetrameric CENP-T-W-S-X complex that binds and supercoils DNA, and plays an important role in kinetochore assembly. CENPT has a fundamental role in kinetochore assembly and function. It is one of the inner kinetochore proteins, with most further proteins binding downstream. Required for normal chromosome organization and normal progress through mitosis. In Gallus gallus (Chicken), this protein is Centromere protein T (CENPT).